The following is a 65-amino-acid chain: Toxin Co52 (65 aa).

An LCN-type CS-alpha/beta domain is found at 2-65 (EDGYLVDKTG…PTWPLPNKTC (64 aa)). 4 disulfides stabilise this stretch: C12–C65, C16–C41, C25–C46, and C29–C48.

Expressed by the venom gland.

It is found in the secreted. Its function is as follows. Beta toxins bind voltage-independently at site-4 of sodium channels (Nav) and shift the voltage of activation toward more negative potentials thereby affecting sodium channel activation and promoting spontaneous and repetitive firing. Not toxic to mice, chicks, crickets or woodlice (at 5 ug). This is Toxin Co52 from Centruroides ornatus (Scorpion).